A 387-amino-acid chain; its full sequence is Succinate--CoA ligase [ADP-forming] subunit beta (387 aa).

Residues Lys-9–Arg-244 form the ATP-grasp domain. Residues Lys-46, Gly-53–Gly-55, Glu-99, Cys-102, and Glu-107 each bind ATP. Mg(2+) contacts are provided by Asn-199 and Asp-213. Substrate contacts are provided by residues Asn-264 and Gly-321 to Val-323.

It belongs to the succinate/malate CoA ligase beta subunit family. In terms of assembly, heterotetramer of two alpha and two beta subunits. It depends on Mg(2+) as a cofactor.

The enzyme catalyses succinate + ATP + CoA = succinyl-CoA + ADP + phosphate. The catalysed reaction is GTP + succinate + CoA = succinyl-CoA + GDP + phosphate. The protein operates within carbohydrate metabolism; tricarboxylic acid cycle; succinate from succinyl-CoA (ligase route): step 1/1. Its function is as follows. Succinyl-CoA synthetase functions in the citric acid cycle (TCA), coupling the hydrolysis of succinyl-CoA to the synthesis of either ATP or GTP and thus represents the only step of substrate-level phosphorylation in the TCA. The beta subunit provides nucleotide specificity of the enzyme and binds the substrate succinate, while the binding sites for coenzyme A and phosphate are found in the alpha subunit. The protein is Succinate--CoA ligase [ADP-forming] subunit beta of Legionella pneumophila (strain Corby).